The sequence spans 439 residues: Trigger factor (439 aa).

The 86-residue stretch at 165–250 (GDFAKFDFEG…LHEIQELKLP (86 aa)) folds into the PPIase FKBP-type domain.

This sequence belongs to the FKBP-type PPIase family. Tig subfamily.

It localises to the cytoplasm. The catalysed reaction is [protein]-peptidylproline (omega=180) = [protein]-peptidylproline (omega=0). Its function is as follows. Involved in protein export. Acts as a chaperone by maintaining the newly synthesized protein in an open conformation. Functions as a peptidyl-prolyl cis-trans isomerase. The polypeptide is Trigger factor (Campylobacter lari (strain RM2100 / D67 / ATCC BAA-1060)).